Here is a 180-residue protein sequence, read N- to C-terminus: NAD(P)H-quinone oxidoreductase subunit I, chloroplastic (180 aa).

2 4Fe-4S ferredoxin-type domains span residues 55-84 (GRIH…VDWR) and 95-124 (LNYS…MTEE). [4Fe-4S] cluster is bound by residues C64, C67, C70, C74, C104, C107, C110, and C114.

The protein belongs to the complex I 23 kDa subunit family. NDH is composed of at least 16 different subunits, 5 of which are encoded in the nucleus. Requires [4Fe-4S] cluster as cofactor.

The protein resides in the plastid. It localises to the chloroplast thylakoid membrane. It catalyses the reaction a plastoquinone + NADH + (n+1) H(+)(in) = a plastoquinol + NAD(+) + n H(+)(out). The enzyme catalyses a plastoquinone + NADPH + (n+1) H(+)(in) = a plastoquinol + NADP(+) + n H(+)(out). In terms of biological role, NDH shuttles electrons from NAD(P)H:plastoquinone, via FMN and iron-sulfur (Fe-S) centers, to quinones in the photosynthetic chain and possibly in a chloroplast respiratory chain. The immediate electron acceptor for the enzyme in this species is believed to be plastoquinone. Couples the redox reaction to proton translocation, and thus conserves the redox energy in a proton gradient. This chain is NAD(P)H-quinone oxidoreductase subunit I, chloroplastic, found in Amborella trichopoda.